Here is a 276-residue protein sequence, read N- to C-terminus: Bis(5'-nucleosyl)-tetraphosphatase, symmetrical (276 aa).

This sequence belongs to the Ap4A hydrolase family.

It carries out the reaction P(1),P(4)-bis(5'-adenosyl) tetraphosphate + H2O = 2 ADP + 2 H(+). Its function is as follows. Hydrolyzes diadenosine 5',5'''-P1,P4-tetraphosphate to yield ADP. The sequence is that of Bis(5'-nucleosyl)-tetraphosphatase, symmetrical from Legionella pneumophila (strain Lens).